The primary structure comprises 75 residues: ATP synthase subunit c (75 aa).

Helical transmembrane passes span 13-33 (LSVI…GILF) and 55-75 (FIGL…ALII).

The protein belongs to the ATPase C chain family. F-type ATPases have 2 components, F(1) - the catalytic core - and F(0) - the membrane proton channel. F(1) has five subunits: alpha(3), beta(3), gamma(1), delta(1), epsilon(1). F(0) has three main subunits: a(1), b(2) and c(10-14). The alpha and beta chains form an alternating ring which encloses part of the gamma chain. F(1) is attached to F(0) by a central stalk formed by the gamma and epsilon chains, while a peripheral stalk is formed by the delta and b chains.

It localises to the cell membrane. In terms of biological role, f(1)F(0) ATP synthase produces ATP from ADP in the presence of a proton or sodium gradient. F-type ATPases consist of two structural domains, F(1) containing the extramembraneous catalytic core and F(0) containing the membrane proton channel, linked together by a central stalk and a peripheral stalk. During catalysis, ATP synthesis in the catalytic domain of F(1) is coupled via a rotary mechanism of the central stalk subunits to proton translocation. Key component of the F(0) channel; it plays a direct role in translocation across the membrane. A homomeric c-ring of between 10-14 subunits forms the central stalk rotor element with the F(1) delta and epsilon subunits. This is ATP synthase subunit c from Bifidobacterium longum (strain DJO10A).